Here is a 121-residue protein sequence, read N- to C-terminus: Protein PilH (121 aa).

A Response regulatory domain is found at 3–119; that stretch reads RILIVDDSPT…TLLKTINAVL (117 aa). At aspartate 52 the chain carries 4-aspartylphosphate.

May be a part of a signal-transduction system that regulates twitching motility by controlling pilus function (extension and retraction). This chain is Protein PilH (pilH), found in Pseudomonas aeruginosa (strain ATCC 15692 / DSM 22644 / CIP 104116 / JCM 14847 / LMG 12228 / 1C / PRS 101 / PAO1).